The following is a 698-amino-acid chain: DNA ligase (698 aa).

NAD(+) contacts are provided by residues 35 to 39 (DSVYD), 84 to 85 (SL), and Glu123. Lys125 functions as the N6-AMP-lysine intermediate in the catalytic mechanism. Positions 146, 183, 302, and 326 each coordinate NAD(+). Residues Cys420, Cys423, Cys438, and Cys443 each contribute to the Zn(2+) site. The BRCT domain maps to 612 to 698 (NGKGHLNGQT…QNSADTIHLL (87 aa)).

This sequence belongs to the NAD-dependent DNA ligase family. LigA subfamily. Mg(2+) serves as cofactor. It depends on Mn(2+) as a cofactor.

The catalysed reaction is NAD(+) + (deoxyribonucleotide)n-3'-hydroxyl + 5'-phospho-(deoxyribonucleotide)m = (deoxyribonucleotide)n+m + AMP + beta-nicotinamide D-nucleotide.. In terms of biological role, DNA ligase that catalyzes the formation of phosphodiester linkages between 5'-phosphoryl and 3'-hydroxyl groups in double-stranded DNA using NAD as a coenzyme and as the energy source for the reaction. It is essential for DNA replication and repair of damaged DNA. The sequence is that of DNA ligase from Synechococcus sp. (strain WH7803).